Consider the following 676-residue polypeptide: DNA ligase (676 aa).

NAD(+) contacts are provided by residues 32–36 (DAEYD), 81–82 (SL), and Glu113. Lys115 (N6-AMP-lysine intermediate) is an active-site residue. NAD(+) is bound by residues Arg136, Glu173, Lys291, and Lys315. Zn(2+) is bound by residues Cys409, Cys412, Cys427, and Cys433. The BRCT domain maps to 595–676 (SEKTYFFNKK…LNSLIRIKEQ (82 aa)).

The protein belongs to the NAD-dependent DNA ligase family. LigA subfamily. It depends on Mg(2+) as a cofactor. Mn(2+) serves as cofactor.

The catalysed reaction is NAD(+) + (deoxyribonucleotide)n-3'-hydroxyl + 5'-phospho-(deoxyribonucleotide)m = (deoxyribonucleotide)n+m + AMP + beta-nicotinamide D-nucleotide.. In terms of biological role, DNA ligase that catalyzes the formation of phosphodiester linkages between 5'-phosphoryl and 3'-hydroxyl groups in double-stranded DNA using NAD as a coenzyme and as the energy source for the reaction. It is essential for DNA replication and repair of damaged DNA. In Buchnera aphidicola subsp. Acyrthosiphon pisum (strain Tuc7), this protein is DNA ligase.